Consider the following 292-residue polypeptide: Calponin-1 (292 aa).

One can recognise a Calponin-homology (CH) domain in the interval 28–131; that stretch reads PQTERQLRVW…STLIALASQA (104 aa). 3 Calponin-like repeats span residues 164 to 189, 204 to 229, and 243 to 268; these read IGLQ…RHLY, ISLQ…RQIF, and IGLQ…RQVY. T170 bears the Phosphothreonine; by ROCK2 mark. S175 is modified (phosphoserine; by PKC, CaMK2 and ROCK2). T180 and T184 each carry phosphothreonine; by ROCK2. Phosphothreonine; by PKC and CaMK2 is present on T184. Residues 185 to 193 form a calmodulin-binding region; the sequence is RRHLYDPKL. T259 carries the post-translational modification Phosphothreonine; by ROCK2.

The protein belongs to the calponin family. In terms of processing, phosphorylation by PKC or CaM kinase II reduces the binding of calponin to F-actin and tropomyosin. Smooth muscle, and tissues containing significant amounts of smooth muscle.

Its function is as follows. Thin filament-associated protein that is implicated in the regulation and modulation of smooth muscle contraction. It is capable of binding to actin, calmodulin and tropomyosin. The interaction of calponin with actin inhibits the actomyosin Mg-ATPase activity. The chain is Calponin-1 (CNN1) from Gallus gallus (Chicken).